The chain runs to 124 residues: MLVIFLGILGLLANQVLGLPTQAGGHLRSTDNPPQEELGYWCTYMESCKFCWACAHGICKNKVNMSMPLIIENSYLTSCEVSRWYNQCTYSEGNGHYHVMDCSDPVPHNRPHRLLMKIYEKEDL.

Residues 1–18 (MLVIFLGILGLLANQVLG) form the signal peptide. Asn-64 carries an N-linked (GlcNAc...) asparagine; by host glycan. A Prevents secretion from ER motif is present at residues 121–124 (KEDL).

This sequence belongs to the asfivirus MGF 110 family.

It is found in the virion. The protein resides in the host endoplasmic reticulum-Golgi intermediate compartment. In terms of biological role, causes the redistribution of lumenal ER protein to an enlarged ERGIC compartment. This is Protein MGF 110-4L-B from African swine fever virus (isolate Portugal/Lis 57/1957) (ASFV).